The sequence spans 1372 residues: Disease resistance protein RRS1B (1372 aa).

In terms of domain architecture, TIR spans 2–137; that stretch reads TESEQIVYIS…ETVRDVYEKL (136 aa). One can recognise an NB-ARC domain in the interval 166–417; it reads VGIWGMPGIG…GCGFFPHVGI (252 aa). 170–177 provides a ligand contact to ATP; it reads GMPGIGKT. The stretch at 491–515 is one LRR 1 repeat; it reads PEEIEGMFLDTSNLSFDIKHVAFDN. The stretch at 528-544 is one LRR 2; degenerate repeat; it reads NPEVHHVNNFLKGSLSS. 10 LRR repeats span residues 545 to 568, 570 to 591, 614 to 637, 638 to 658, 659 to 681, 693 to 718, 723 to 747, 749 to 767, 768 to 792, and 798 to 823; these read LPNV…NFDP, HLVE…TKDL, AQNL…TGQL, LHLR…PEIP, PNIE…IVKP, IPGL…KIST, PGKL…VNLE, LKAL…QGFP, RNLK…SLEF, and CVSL…CFDL. Positions 950 to 964 match the Nuclear localization signal motif; that stretch reads INLHCWALGKAVERD. The WRKY DNA-binding region spans 1174–1240; sequence DRGSRSSDLW…YISEHNHPFP (67 aa). 2 disordered regions span residues 1246–1288 and 1337–1372; these read LAGS…ASPP and QTMF…ILNR. Residues 1249 to 1269 show a composition bias toward low complexity; that stretch reads STRSSSSKCSDVTTSASSTVS. Over residues 1270–1279 the composition is skewed to basic and acidic residues; sequence QDKEGPDKSH. The span at 1337–1348 shows a compositional bias: polar residues; sequence QTMFLSRRSSGG.

The protein belongs to the disease resistance TIR-NB-LRR family. As to quaternary structure, interacts with RPS4B. RPS4B-RRS1B heterodimer interacts with the bacterial effectors AvrRps4 and PopP2.

It is found in the nucleus. Transcription factor. Interacts specifically with the W box (5'-(T)TGAC[CT]-3'), a frequently occurring elicitor-responsive cis-acting element. Also acts as a disease resistance protein that specifically recognizes the AvrRps4 type III effector avirulence protein from P.syringae. Heterodimerization with RPS4B is required to form a functional complex to recognize AvrRps4 and to mediate the hypersensitive response. In Arabidopsis thaliana (Mouse-ear cress), this protein is Disease resistance protein RRS1B.